A 202-amino-acid polypeptide reads, in one-letter code: Hypoxanthine-guanine phosphoribosyltransferase (202 aa).

2 residues coordinate diphosphate: Lys-66 and Gly-67. 2 residues coordinate Mg(2+): Glu-122 and Asp-123. Residue Asp-126 is the Proton acceptor of the active site. Residues Lys-154, 175 to 176, and Asp-182 contribute to the GMP site; that span reads FV. Arg-188 contributes to the diphosphate binding site.

The protein belongs to the purine/pyrimidine phosphoribosyltransferase family. The cofactor is Mg(2+).

It localises to the cytoplasm. The enzyme catalyses IMP + diphosphate = hypoxanthine + 5-phospho-alpha-D-ribose 1-diphosphate. It catalyses the reaction GMP + diphosphate = guanine + 5-phospho-alpha-D-ribose 1-diphosphate. Its pathway is purine metabolism; IMP biosynthesis via salvage pathway; IMP from hypoxanthine: step 1/1. It participates in purine metabolism; GMP biosynthesis via salvage pathway; GMP from guanine: step 1/1. In terms of biological role, purine salvage pathway enzyme that catalyzes the transfer of the ribosyl-5-phosphate group from 5-phospho-alpha-D-ribose 1-diphosphate (PRPP) to the N9 position of the 6-oxopurines hypoxanthine and guanine to form the corresponding ribonucleotides IMP (inosine 5'-monophosphate) and GMP (guanosine 5'-monophosphate), with the release of PPi. In Mycobacterium tuberculosis (strain CDC 1551 / Oshkosh), this protein is Hypoxanthine-guanine phosphoribosyltransferase (hpt).